Reading from the N-terminus, the 340-residue chain is DNA-directed RNA polymerase subunit alpha (340 aa).

Residues 1–233 are alpha N-terminal domain (alpha-NTD); sequence MYRNWRDLIS…EQLSIFINFD (233 aa). The tract at residues 251–340 is alpha C-terminal domain (alpha-CTD); the sequence is VNENLYRSVD…RIRGERKDEE (90 aa).

Belongs to the RNA polymerase alpha chain family. As to quaternary structure, homodimer. The RNAP catalytic core consists of 2 alpha, 1 beta, 1 beta' and 1 omega subunit. When a sigma factor is associated with the core the holoenzyme is formed, which can initiate transcription.

The enzyme catalyses RNA(n) + a ribonucleoside 5'-triphosphate = RNA(n+1) + diphosphate. Its function is as follows. DNA-dependent RNA polymerase catalyzes the transcription of DNA into RNA using the four ribonucleoside triphosphates as substrates. The chain is DNA-directed RNA polymerase subunit alpha from Geobacter metallireducens (strain ATCC 53774 / DSM 7210 / GS-15).